The following is a 556-amino-acid chain: Phosphoacetylglucosamine mutase (556 aa).

Catalysis depends on serine 68, which acts as the Phosphoserine intermediate. The Mg(2+) site is built by serine 68, aspartate 286, aspartate 288, and aspartate 290. Position 68 is a phosphoserine (serine 68). Residues 386 to 388 (EAN), 518 to 522 (RPSGT), and arginine 527 contribute to the substrate site.

The protein belongs to the phosphohexose mutase family. Requires Mg(2+) as cofactor.

The catalysed reaction is N-acetyl-alpha-D-glucosamine 1-phosphate = N-acetyl-D-glucosamine 6-phosphate. It participates in nucleotide-sugar biosynthesis; UDP-N-acetyl-alpha-D-glucosamine biosynthesis; N-acetyl-alpha-D-glucosamine 1-phosphate from alpha-D-glucosamine 6-phosphate (route I): step 2/2. Functionally, interconverts GlcNAc-6-P and GlcNAc-1-P. The polypeptide is Phosphoacetylglucosamine mutase (DRT101) (Arabidopsis thaliana (Mouse-ear cress)).